The following is a 247-amino-acid chain: Synaptogyrin homolog 1 (247 aa).

The region spanning 21–175 (FFKKPTVLFR…AAFFAWRRYE (155 aa)) is the MARVEL domain. The next 4 membrane-spanning stretches (helical) occupy residues 25-45 (PTVL…YSVS), 69-89 (CSFA…LIVL), 105-125 (AVLA…IGFF), and 151-171 (FGIL…FFAW). Residues 206 to 247 (DSTGIGHVGAPPPQSSYQSGAAPQTMQQPPSNPYTQSEGYGY) are disordered. Over residues 220-247 (SSYQSGAAPQTMQQPPSNPYTQSEGYGY) the composition is skewed to polar residues.

It belongs to the synaptogyrin family. Expressed in a wide variety of neurons and is expressed weakly in the non-neuronal distal tip cells. A punctate pattern was observed in the ventral and dorsal nerve cords and the nerve ring. Weak expression is seen in neuronal cell bodies and commissures.

Its subcellular location is the membrane. In Caenorhabditis elegans, this protein is Synaptogyrin homolog 1 (sng-1).